The chain runs to 505 residues: Alkylglycerol monooxygenase (505 aa).

2 helical membrane-spanning segments follow: residues 56–76 (VSAW…ISGH) and 104–124 (AVAI…ELPW). The 133-residue stretch at 130 to 262 (WIFCLFFQDF…FIIWDKMFNT (133 aa)) folds into the Fatty acid hydroxylase domain. A Histidine box-1 motif is present at residues 145 to 149 (HRAVH). Residues 158-162 (HTIHH) carry the Histidine box-2 motif. The Histidine box-3 motif lies at 234-238 (HRVHH). A run of 4 helical transmembrane segments spans residues 366–386 (ILVK…FFHF), 396–416 (LDCT…GAFF), 430–450 (CCGV…AGTH), and 452–472 (LFVI…VLVE).

This sequence belongs to the sterol desaturase family. TMEM195 subfamily. Fe cation serves as cofactor.

The protein resides in the endoplasmic reticulum membrane. The catalysed reaction is 1-O-(1,2-saturated-alkyl)-sn-glycerol + (6R)-L-erythro-5,6,7,8-tetrahydrobiopterin + O2 = a 1-(1-hydroxyalkyl)-sn-glycerol + (6R)-L-erythro-6,7-dihydrobiopterin + H2O. Functionally, glyceryl-ether monooxygenase that cleaves the O-alkyl bond of ether lipids. This is Alkylglycerol monooxygenase from Caenorhabditis elegans.